A 128-amino-acid polypeptide reads, in one-letter code: Cionin (128 aa).

The signal sequence occupies residues 1-22; it reads MGSNIVIYFSIIVIVTLNVNGV. Residues 23–108 constitute a propeptide that is removed on maturation; that stretch reads PASDLFKSVS…NQGHMQRMDR (86 aa). Sulfotyrosine is present on residues Tyr-110 and Tyr-111. The residue at position 116 (Phe-116) is a Phenylalanine amide. The propeptide occupies 120 to 128; it reads AIEDVDYEY.

It belongs to the gastrin/cholecystokinin family. Expressed in both the gut and the neural ganglion.

It is found in the secreted. This is Cionin from Ciona intestinalis (Transparent sea squirt).